The chain runs to 261 residues: Glucose 1-dehydrogenase (261 aa).

An NADP(+)-binding site is contributed by 11-35; that stretch reads VITGSSTGLGKSMAIRFATEKAKVV. Position 145 (serine 145) interacts with substrate. The active-site Proton acceptor is tyrosine 158.

This sequence belongs to the short-chain dehydrogenases/reductases (SDR) family. Homotetramer.

The enzyme catalyses D-glucose + NAD(+) = D-glucono-1,5-lactone + NADH + H(+). It catalyses the reaction D-glucose + NADP(+) = D-glucono-1,5-lactone + NADPH + H(+). The protein is Glucose 1-dehydrogenase of Priestia megaterium (Bacillus megaterium).